Consider the following 201-residue polypeptide: Ribonuclease HII (201 aa).

Positions 10–200 constitute an RNase H type-2 domain; it reads LIEAGCDEAG…LGDGQLELFS (191 aa). Residues D16, E17, and D108 each coordinate a divalent metal cation.

It belongs to the RNase HII family. The cofactor is Mn(2+). It depends on Mg(2+) as a cofactor.

It is found in the cytoplasm. The enzyme catalyses Endonucleolytic cleavage to 5'-phosphomonoester.. Endonuclease that specifically degrades the RNA of RNA-DNA hybrids. The protein is Ribonuclease HII of Bacteroides fragilis (strain YCH46).